The following is a 187-amino-acid chain: Cytochrome c oxidase assembly protein CtaG (187 aa).

Residues Met-1–Leu-9 are Cytoplasmic-facing. A helical; Signal-anchor for type II membrane protein transmembrane segment spans residues Ala-10–Ile-30. Over Tyr-31 to Tyr-187 the chain is Periplasmic.

It belongs to the COX11/CtaG family.

Its subcellular location is the cell inner membrane. In terms of biological role, exerts its effect at some terminal stage of cytochrome c oxidase synthesis, probably by being involved in the insertion of the copper B into subunit I. The protein is Cytochrome c oxidase assembly protein CtaG of Rickettsia felis (strain ATCC VR-1525 / URRWXCal2) (Rickettsia azadi).